A 454-amino-acid polypeptide reads, in one-letter code: Cobyrinate a,c-diamide synthase (454 aa).

Residues 247 to 442 (KIGIAMDSAF…IHAHWASNPN (196 aa)) enclose the GATase cobBQ-type domain. Cys-329 (nucleophile) is an active-site residue.

The protein belongs to the CobB/CbiA family. It depends on Mg(2+) as a cofactor.

It carries out the reaction cob(II)yrinate + 2 L-glutamine + 2 ATP + 2 H2O = cob(II)yrinate a,c diamide + 2 L-glutamate + 2 ADP + 2 phosphate + 2 H(+). Its pathway is cofactor biosynthesis; adenosylcobalamin biosynthesis; cob(II)yrinate a,c-diamide from sirohydrochlorin (anaerobic route): step 10/10. Functionally, catalyzes the ATP-dependent amidation of the two carboxylate groups at positions a and c of cobyrinate, using either L-glutamine or ammonia as the nitrogen source. This Leptospira interrogans serogroup Icterohaemorrhagiae serovar Lai (strain 56601) protein is Cobyrinate a,c-diamide synthase.